A 121-amino-acid chain; its full sequence is Small ribosomal subunit protein uS13 (121 aa).

Positions 94 to 121 (GLPVRGQSSKTNARTVKGPRKTVANKKK) are disordered. A compositionally biased stretch (basic residues) spans 110–121 (KGPRKTVANKKK).

The protein belongs to the universal ribosomal protein uS13 family. Part of the 30S ribosomal subunit. Forms a loose heterodimer with protein S19. Forms two bridges to the 50S subunit in the 70S ribosome.

Functionally, located at the top of the head of the 30S subunit, it contacts several helices of the 16S rRNA. In the 70S ribosome it contacts the 23S rRNA (bridge B1a) and protein L5 of the 50S subunit (bridge B1b), connecting the 2 subunits; these bridges are implicated in subunit movement. Contacts the tRNAs in the A and P-sites. The chain is Small ribosomal subunit protein uS13 from Mesoplasma florum (strain ATCC 33453 / NBRC 100688 / NCTC 11704 / L1) (Acholeplasma florum).